A 219-amino-acid polypeptide reads, in one-letter code: Protein matrimony (219 aa).

A compositionally biased stretch (basic residues) spans 74–99 (PPAKAHPHPHQHQHHHHHHKHIHRTQ). A disordered region spans residues 74–104 (PPAKAHPHPHQHQHHHHHHKHIHRTQLKPPP). The SAM domain maps to 159 to 219 (NHAANVEQIL…NRIMDVLQTL (61 aa)).

As to quaternary structure, interacts with polo. Interacts with cort. Post-translationally, probably ubiquitinated: degraded during the oocyte-to-embryo transition by the anaphase promoting complex/cyclosome (APC/C) containing cort protein.

Its subcellular location is the nucleus. It localises to the chromosome. Its function is as follows. Polo kinase inhibitor required to maintain G2 arrest in the meiotic cell cycle in females. Holds heterochromatically paired homologs together from the end of pachytene until metaphase I. Haploinsufficient locus for homologous achiasmate segregation and may be required for the maintenance of heterochromatic pairings. The chain is Protein matrimony (mtrm) from Drosophila yakuba (Fruit fly).